Here is a 62-residue protein sequence, read N- to C-terminus: Kurtoxin-like I (62 aa).

Positions 2–62 (IDGYPVDNWN…ARIKRGGRCN (61 aa)) constitute an LCN-type CS-alpha/beta domain. 4 disulfide bridges follow: Cys-12/Cys-61, Cys-16/Cys-37, Cys-23/Cys-44, and Cys-27/Cys-46.

Expressed by the venom gland.

The protein resides in the secreted. Its function is as follows. This neurotoxin acts on sodium and calcium channels. Potently inhibits native voltage-gated T-type calcium channel activity in mouse male germ cells and weakly blocks Cav3.3/CACNA1I channels expressed in Xenopus oocytes. In addition, significantly slows the inactivation of activated recombinant sodium channels (Nav1.5/SCN5A). The polypeptide is Kurtoxin-like I (Parabuthus granulatus (Granulated thick-tailed scorpion)).